Consider the following 138-residue polypeptide: uncharacterized protein (138 aa).

Asp35–Asn42 is a binding site for ATP.

This is an uncharacterized protein from Acanthamoeba polyphaga mimivirus (APMV).